We begin with the raw amino-acid sequence, 420 residues long: DNA repair protein NreA (420 aa).

Residues 413–420 (QTDIFDFA) carry the PIP motif motif.

This sequence belongs to the Nre family. As to quaternary structure, interacts with the DNA polymerase sliding clamp (PCNA) via the PIP (PCNA-interacting peptide) motif.

In terms of biological role, involved in DNA damage repair. Works together with the UvrABC proteins in repairing DNA damage resulting from exposure to the DNA damaging agent mitomycin C (MMC). The protein is DNA repair protein NreA of Haloferax volcanii (strain ATCC 29605 / DSM 3757 / JCM 8879 / NBRC 14742 / NCIMB 2012 / VKM B-1768 / DS2) (Halobacterium volcanii).